The sequence spans 109 residues: Nucleoid-associated protein HS_1309 (109 aa).

This sequence belongs to the YbaB/EbfC family. In terms of assembly, homodimer.

The protein resides in the cytoplasm. It localises to the nucleoid. In terms of biological role, binds to DNA and alters its conformation. May be involved in regulation of gene expression, nucleoid organization and DNA protection. The sequence is that of Nucleoid-associated protein HS_1309 from Histophilus somni (strain 129Pt) (Haemophilus somnus).